The sequence spans 31 residues: Cytochrome b6-f complex subunit 6 (31 aa).

Residues 4 to 24 (ITSYFGFLLAALTITSVLFIG) form a helical membrane-spanning segment.

This sequence belongs to the PetL family. In terms of assembly, the 4 large subunits of the cytochrome b6-f complex are cytochrome b6, subunit IV (17 kDa polypeptide, PetD), cytochrome f and the Rieske protein, while the 4 small subunits are PetG, PetL, PetM and PetN. The complex functions as a dimer.

It localises to the plastid. The protein localises to the chloroplast thylakoid membrane. In terms of biological role, component of the cytochrome b6-f complex, which mediates electron transfer between photosystem II (PSII) and photosystem I (PSI), cyclic electron flow around PSI, and state transitions. PetL is important for photoautotrophic growth as well as for electron transfer efficiency and stability of the cytochrome b6-f complex. In Lepidium virginicum (Virginia pepperweed), this protein is Cytochrome b6-f complex subunit 6.